Here is a 374-residue protein sequence, read N- to C-terminus: RNA binding protein fox-1 homolog 3 (374 aa).

Pro residues predominate over residues 1–29; that stretch reads MAQPYPPAQYPPPPQNGIPAEYAPPPPHP. The interval 1 to 105 is disordered; it reads MAQPYPPAQY…QQPKRLHVSN (105 aa). The segment covering 49–74 has biased composition (polar residues); it reads TPAQTHPEQPGTEASTQPIAGTQTVP. Residues 99 to 175 form the RRM domain; the sequence is KRLHVSNIPF…RKIEVNNATA (77 aa). R223 is subject to Asymmetric dimethylarginine; alternate. At R223 the chain carries Omega-N-methylarginine; alternate. Residue R319 is modified to Asymmetric dimethylarginine.

Phosphorylated. As to expression, widely expressed in brain, including in cerebral cortex, hippocampus, thalamus, caudate/putamen, cerebellum, as well as in the spinal cord (at protein level). Not expressed in all neuronal cells within a region, in cerebellum, expression is absent in Purkinje cells (at protein level). Expressed in the retina in the ganglion cells and some cells in the inner nuclear layer, but absent from the photoreceptor cells and most cells in the inner nuclear layer (at protein level).

It is found in the nucleus. The protein localises to the cytoplasm. Pre-mRNA alternative splicing regulator. Regulates alternative splicing of RBFOX2 to enhance the production of mRNA species that are targeted for nonsense-mediated decay (NMD). This is RNA binding protein fox-1 homolog 3 (Rbfox3) from Mus musculus (Mouse).